The primary structure comprises 379 residues: Probable leucine aminopeptidase TRV_05286 (379 aa).

A signal peptide spans Met-1–Ala-18. Zn(2+)-binding residues include His-182 and Asp-201. Residues Asn-202 and Asn-226 are each glycosylated (N-linked (GlcNAc...) asparagine). Zn(2+) is bound by residues Glu-240 and Asp-267. Cys-312 and Cys-316 are joined by a disulfide. Residue His-345 coordinates Zn(2+).

Belongs to the peptidase M28 family. M28E subfamily. As to quaternary structure, monomer. Zn(2+) is required as a cofactor.

The protein localises to the secreted. Probable extracellular aminopeptidase which contributes to pathogenicity. This is Probable leucine aminopeptidase TRV_05286 from Trichophyton verrucosum (strain HKI 0517).